The chain runs to 2554 residues: Highly reducing polyketide synthase PKS6 (2554 aa).

The tract at residues 1–48 is disordered; sequence MGSLSAVPATNGNHAALNGSASTNGQHVNGSTHVNGNHSLNGSAQVNG. Residues 8 to 48 are compositionally biased toward polar residues; it reads PATNGNHAALNGSASTNGQHVNGSTHVNGNHSLNGSAQVNG. The 426-residue stretch at 56 to 481 folds into the Ketosynthase family 3 (KS3) domain; sequence LEPIAVVGMS…GTNAHVVVDA (426 aa). Active-site for beta-ketoacyl synthase activity residues include Cys230, His367, and His407. The tract at residues 595–913 is malonyl-CoA:ACP transacylase (MAT) domain; the sequence is VFSGQGAQYP…HYTGSLKRGE (319 aa). Residues 981-1119 form an N-terminal hotdog fold region; that stretch reads HELLGTLVHD…GLVQVILKSE (139 aa). Residues 981–1281 form a dehydratase (DH) domain region; sequence HELLGTLVHD…QAWGVVATKL (301 aa). The 307-residue stretch at 981–1287 folds into the PKS/mFAS DH domain; it reads HELLGTLVHD…ATKLPDVSIG (307 aa). Catalysis depends on His1013, which acts as the Proton acceptor; for dehydratase activity. Positions 1137–1287 are C-terminal hotdog fold; sequence AQHIPANQFY…ATKLPDVSIG (151 aa). The active-site Proton donor; for dehydratase activity is the Asp1200. The interval 1451–1556 is methyltransferase (CMet) domain; the sequence is VEVGAGTGSA…KTMLRPGGKL (106 aa). The enoyl reductase (ER) domain stretch occupies residues 1840 to 2153; the sequence is GVLDTIRWVD…AGKHTGKVIL (314 aa). A ketoreductase (KR) domain region spans residues 2177–2353; the sequence is ATYLVVGGLG…TAYAVNIGAI (177 aa). Residues 2457-2534 enclose the Carrier domain; it reads EAQDIICDAI…ELAEIVTKGS (78 aa). O-(pantetheine 4'-phosphoryl)serine is present on Ser2494.

The protein operates within secondary metabolite biosynthesis. Highly reducing polyketide synthase; part of the gene cluster that mediates the biosynthesis of the lipopeptide fusaristatin A. Fusaristatin A consists of a polyketide chain linked to three amino acid residues glutamine (Gln), dehydroalanine (dehydro-Ala), and beta-aminoisobutyric acid. The biosynthesis starts with formation of a linear polyketide chain by the highly reducing polyketide synthase PKS6. The gene cluster does not contain an acyl-CoA ligase or an acyl-transferase, and it is therefore predicted that the polyketide is transferred directly to the nonribosomal peptide synthetase NRPS7. Modules 1-3 from NRPS7 incorporate dehydro-Ala, Gln, and beta-aminoisobutyric acid in the compound, which is released by cyclization. The beta-aminoisobutyric acid units are most likely not freely available to the NRPS, but can be synthesized from thymine, which requires a dehydrogenase, a monooxygenase, and an aminotransferase. The fusaristatin A cluster contains a cytochrome P450 monooxygenase (FGSG_08207) and an aminotransferase (FGSG_17085), which theoretically can perform two of the enzymatic steps. The enzymes may however also be involved in biosynthesis of dehydroalanine or modification of the polyketide. The dehydro-Ala residue can be a result of cyclization, where serine is dehydrated. The last gene of the cluster encodes a protein with an A/B barrel domain found in variable enzymes, which hampers functional prediction. This is Highly reducing polyketide synthase PKS6 from Gibberella zeae (strain ATCC MYA-4620 / CBS 123657 / FGSC 9075 / NRRL 31084 / PH-1) (Wheat head blight fungus).